The primary structure comprises 354 residues: Adenine deaminase (354 aa).

Residues histidine 19, histidine 21, and histidine 211 each contribute to the Zn(2+) site. Glutamate 214 (proton donor) is an active-site residue. Aspartate 291 is a binding site for Zn(2+). Substrate is bound at residue aspartate 292.

This sequence belongs to the metallo-dependent hydrolases superfamily. Adenosine and AMP deaminases family. Adenine deaminase type 2 subfamily. Zn(2+) serves as cofactor.

It is found in the cytoplasm. Its subcellular location is the nucleus. It carries out the reaction adenine + H2O + H(+) = hypoxanthine + NH4(+). Its function is as follows. Catalyzes the hydrolytic deamination of adenine to hypoxanthine. Plays an important role in the purine salvage pathway and in nitrogen catabolism. This is Adenine deaminase (aah1) from Aspergillus fumigatus (strain ATCC MYA-4609 / CBS 101355 / FGSC A1100 / Af293) (Neosartorya fumigata).